Reading from the N-terminus, the 413-residue chain is Phosphopentomutase (413 aa).

Mn(2+)-binding residues include aspartate 11, aspartate 306, histidine 311, aspartate 347, histidine 348, and histidine 359.

Belongs to the phosphopentomutase family. It depends on Mn(2+) as a cofactor.

It localises to the cytoplasm. It carries out the reaction 2-deoxy-alpha-D-ribose 1-phosphate = 2-deoxy-D-ribose 5-phosphate. The catalysed reaction is alpha-D-ribose 1-phosphate = D-ribose 5-phosphate. Its pathway is carbohydrate degradation; 2-deoxy-D-ribose 1-phosphate degradation; D-glyceraldehyde 3-phosphate and acetaldehyde from 2-deoxy-alpha-D-ribose 1-phosphate: step 1/2. In terms of biological role, isomerase that catalyzes the conversion of deoxy-ribose 1-phosphate (dRib-1-P) and ribose 1-phosphate (Rib-1-P) to deoxy-ribose 5-phosphate (dRib-5-P) and ribose 5-phosphate (Rib-5-P), respectively. In Helicobacter pylori (strain J99 / ATCC 700824) (Campylobacter pylori J99), this protein is Phosphopentomutase.